Consider the following 511-residue polypeptide: Xylose import ATP-binding protein XylG (511 aa).

2 consecutive ABC transporter domains span residues 6 to 244 and 261 to 506; these read LEMR…VGRE and FEAR…IGKP. Position 38-45 (38-45) interacts with ATP; the sequence is GENGAGKS.

It belongs to the ABC transporter superfamily. Xylose importer (TC 3.A.1.2.4) family. The complex is composed of two ATP-binding proteins (XylG), two transmembrane proteins (XylH) and a solute-binding protein (XylF).

It localises to the cell inner membrane. The catalysed reaction is D-xylose(out) + ATP + H2O = D-xylose(in) + ADP + phosphate + H(+). Functionally, part of the ABC transporter complex XylFGH involved in xylose import. Responsible for energy coupling to the transport system. The sequence is that of Xylose import ATP-binding protein XylG from Brucella suis biovar 1 (strain 1330).